Consider the following 366-residue polypeptide: Lysophosphatidic acid receptor 1-B (366 aa).

At 1–52 (MTSLSEFVSEPIGMMSQTSAASESQCYYNETIAFFYNRSGKYLDTEWNAVSK) the chain is on the extracellular side. Intrachain disulfides connect Cys26–Cys192 and Cys190–Cys197. N-linked (GlcNAc...) asparagine glycans are attached at residues Asn29 and Asn37. A 1-acyl-sn-glycero-3-phosphate is bound at residue Lys41. A helical membrane pass occupies residues 53 to 77 (LVMGLGITVCIFIMLANLLVMVAIY). Topologically, residues 78 to 85 (VNRRFHFP) are cytoplasmic. Residues 86 to 109 (IYYLMANLAAADFFAGLAYFYLMF) traverse the membrane as a helical segment. The Extracellular segment spans residues 110 to 123 (NTGPNTRRLTVSTW). The chain crosses the membrane as a helical span at residues 124–146 (LLRQGLIDTSLTASVANLLAIAI). An a 1-acyl-sn-glycero-3-phosphate-binding site is contributed by 126-131 (RQGLID). Residues 147–165 (ERHITVFRMQLHTRMSNRR) lie on the Cytoplasmic side of the membrane. A helical transmembrane segment spans residues 166–186 (VVVVIVVIWTVAIVMGAIPSV). Residues 187 to 206 (GWNCICDLEHCSNMAPLYSD) lie on the Extracellular side of the membrane. Residues 207 to 227 (SYLIFWTIFNLVTFVVMVVLY) traverse the membrane as a helical segment. Trp212 serves as a coordination point for a 1-acyl-sn-glycero-3-phosphate. Residues 228 to 257 (AHIFVYVRQRTMRMSRHSSGPRRNRDTMMS) lie on the Cytoplasmic side of the membrane. The chain crosses the membrane as a helical span at residues 258 to 282 (LLKTVVIVLGAFIVCWTPGLVLLLL). Over 283-296 (DVCCPQCNILAYEK) the chain is Extracellular. Cys286 and Cys289 are oxidised to a cystine. A helical transmembrane segment spans residues 297 to 317 (FFLLLAEFNSAMNPIIYSYRD). Topologically, residues 318-366 (KEMSATFKQILCCQRTENVNGPTEGSDRSASSLNHTILAGVHSNDHSVV) are cytoplasmic.

This sequence belongs to the G-protein coupled receptor 1 family. As to expression, expressed at high levels in oocytes and at lower levels in brain and spinal cord. Below detection level in lung, heart, kidney, liver, muscle, stomach, and intestine.

The protein localises to the cell surface. It is found in the cell membrane. It localises to the endosome. In terms of biological role, receptor for lysophosphatidic acid (LPA). Plays a role in the reorganization of the actin cytoskeleton, cell migration, differentiation and proliferation, and thereby contributes to the responses to tissue damage and infectious agents. Activates downstream signaling cascades via the G(i)/G(o), G(12)/G(13), and G(q) families of heteromeric G proteins. Signaling inhibits adenylyl cyclase activity and decreases cellular cAMP levels. Signaling triggers an increase of cytoplasmic Ca(2+) levels. Signaling leads to the activation of phospholipase C (PLC) and the formation of inositol 1,4,5-trisphosphate. Signaling mediates activation of down-stream MAP kinases. Contributes to the regulation of cell shape. Promotes Rho-dependent reorganization of the actin cytoskeleton in neuronal cells and neurite retraction. Promotes the activation of Rho and the formation of actin stress fibers. Promotes formation of lamellipodia at the leading edge of migrating cells via activation of Rac. Through its function as lysophosphatidic acid receptor, plays a role in chemotaxis and cell migration, including responses to injury and wounding. Promotes cell proliferation in response to lysophosphatidic acid. The chain is Lysophosphatidic acid receptor 1-B (lpar1-b) from Xenopus laevis (African clawed frog).